A 142-amino-acid chain; its full sequence is MYDNSMKIEFISKSQNESFARVSVAAFVSQLDPTLDELTDVKTAVSEAVTNSIIHGYENKEGIVKIEASIKGRELILIVEDNGIGIENIDMAMQPLYTSKPELERSGMGFTVMETFMDSLQVESEKNKGTRLIMKKVFNSLS.

This sequence belongs to the anti-sigma-factor family.

It carries out the reaction L-seryl-[protein] + ATP = O-phospho-L-seryl-[protein] + ADP + H(+). The catalysed reaction is L-threonyl-[protein] + ATP = O-phospho-L-threonyl-[protein] + ADP + H(+). Binds to sigma F and blocks its ability to form an RNA polymerase holoenzyme (E-sigma F). Phosphorylates SpoIIAA on a serine residue. This phosphorylation may enable SpoIIAA to act as an anti-anti-sigma factor that counteracts SpoIIAB and thus releases sigma F from inhibition. The protein is Anti-sigma F factor of Clostridium kluyveri (strain NBRC 12016).